We begin with the raw amino-acid sequence, 429 residues long: Bifunctional protein GlmU (429 aa).

The tract at residues 1-223 (MKTSILILAA…EDEFMGINDK (223 aa)) is pyrophosphorylase. UDP-N-acetyl-alpha-D-glucosamine-binding positions include 8-11 (LAAG), Lys-22, Gln-74, and 81-82 (GT). Asp-102 lines the Mg(2+) pocket. Residues Gly-135, Glu-149, Asn-164, and Asn-221 each contribute to the UDP-N-acetyl-alpha-D-glucosamine site. Asn-221 provides a ligand contact to Mg(2+). Residues 224–244 (FELSIAENFMQEKIKKYWMQQ) form a linker region. The interval 245–429 (GVIFHLPQST…KNYYYKKFQK (185 aa)) is N-acetyltransferase. Residues Arg-308 and Lys-325 each contribute to the UDP-N-acetyl-alpha-D-glucosamine site. The active-site Proton acceptor is His-336. The UDP-N-acetyl-alpha-D-glucosamine site is built by Tyr-339 and Asn-350. Acetyl-CoA is bound by residues 359–360 (NY), Ser-378, Ala-396, and Arg-413.

It in the N-terminal section; belongs to the N-acetylglucosamine-1-phosphate uridyltransferase family. This sequence in the C-terminal section; belongs to the transferase hexapeptide repeat family. Homotrimer. Mg(2+) serves as cofactor.

It is found in the cytoplasm. It catalyses the reaction alpha-D-glucosamine 1-phosphate + acetyl-CoA = N-acetyl-alpha-D-glucosamine 1-phosphate + CoA + H(+). The catalysed reaction is N-acetyl-alpha-D-glucosamine 1-phosphate + UTP + H(+) = UDP-N-acetyl-alpha-D-glucosamine + diphosphate. The protein operates within nucleotide-sugar biosynthesis; UDP-N-acetyl-alpha-D-glucosamine biosynthesis; N-acetyl-alpha-D-glucosamine 1-phosphate from alpha-D-glucosamine 6-phosphate (route II): step 2/2. Its pathway is nucleotide-sugar biosynthesis; UDP-N-acetyl-alpha-D-glucosamine biosynthesis; UDP-N-acetyl-alpha-D-glucosamine from N-acetyl-alpha-D-glucosamine 1-phosphate: step 1/1. It participates in bacterial outer membrane biogenesis; LPS lipid A biosynthesis. In terms of biological role, catalyzes the last two sequential reactions in the de novo biosynthetic pathway for UDP-N-acetylglucosamine (UDP-GlcNAc). The C-terminal domain catalyzes the transfer of acetyl group from acetyl coenzyme A to glucosamine-1-phosphate (GlcN-1-P) to produce N-acetylglucosamine-1-phosphate (GlcNAc-1-P), which is converted into UDP-GlcNAc by the transfer of uridine 5-monophosphate (from uridine 5-triphosphate), a reaction catalyzed by the N-terminal domain. In Campylobacter jejuni subsp. doylei (strain ATCC BAA-1458 / RM4099 / 269.97), this protein is Bifunctional protein GlmU.